A 303-amino-acid chain; its full sequence is UDP-3-O-acyl-N-acetylglucosamine deacetylase (303 aa).

Zn(2+)-binding residues include H78, H237, and D241. H264 functions as the Proton donor in the catalytic mechanism.

The protein belongs to the LpxC family. Zn(2+) serves as cofactor.

It carries out the reaction a UDP-3-O-[(3R)-3-hydroxyacyl]-N-acetyl-alpha-D-glucosamine + H2O = a UDP-3-O-[(3R)-3-hydroxyacyl]-alpha-D-glucosamine + acetate. It functions in the pathway glycolipid biosynthesis; lipid IV(A) biosynthesis; lipid IV(A) from (3R)-3-hydroxytetradecanoyl-[acyl-carrier-protein] and UDP-N-acetyl-alpha-D-glucosamine: step 2/6. In terms of biological role, catalyzes the hydrolysis of UDP-3-O-myristoyl-N-acetylglucosamine to form UDP-3-O-myristoylglucosamine and acetate, the committed step in lipid A biosynthesis. In Pseudomonas fluorescens (strain Pf0-1), this protein is UDP-3-O-acyl-N-acetylglucosamine deacetylase.